A 237-amino-acid polypeptide reads, in one-letter code: Purine nucleoside phosphorylase DeoD-type (237 aa).

Residue histidine 4 participates in a purine D-ribonucleoside binding. Residues glycine 20, arginine 24, arginine 43, and 87–90 contribute to the phosphate site; that span reads RVGT. Residues 179–181 and 203–204 contribute to the a purine D-ribonucleoside site; these read EME and SD. Aspartate 204 functions as the Proton donor in the catalytic mechanism.

This sequence belongs to the PNP/UDP phosphorylase family. Homohexamer; trimer of homodimers.

It catalyses the reaction a purine D-ribonucleoside + phosphate = a purine nucleobase + alpha-D-ribose 1-phosphate. The enzyme catalyses a purine 2'-deoxy-D-ribonucleoside + phosphate = a purine nucleobase + 2-deoxy-alpha-D-ribose 1-phosphate. Catalyzes the reversible phosphorolytic breakdown of the N-glycosidic bond in the beta-(deoxy)ribonucleoside molecules, with the formation of the corresponding free purine bases and pentose-1-phosphate. This is Purine nucleoside phosphorylase DeoD-type from Exiguobacterium sp. (strain ATCC BAA-1283 / AT1b).